Here is a 155-residue protein sequence, read N- to C-terminus: Large ribosomal subunit protein uL22 (155 aa).

Belongs to the universal ribosomal protein uL22 family. In terms of assembly, part of the 50S ribosomal subunit. Contacts the macrolide antibiotic tylosin in the polypeptide exit tunnel.

In terms of biological role, this protein binds specifically to 23S rRNA. It makes multiple contacts with different domains of the 23S rRNA in the assembled 50S subunit and ribosome. Functionally, contacts all 6 domains of the 23S rRNA, helping stabilize their relative orientation. An extended beta-hairpin in the C-terminus forms part of the polypeptide exit tunnel, in which it helps forms a bend with protein L4, while most of the rest of the protein is located at the polypeptide exit tunnel on the outside of the subunit. This Haloarcula marismortui (strain ATCC 43049 / DSM 3752 / JCM 8966 / VKM B-1809) (Halobacterium marismortui) protein is Large ribosomal subunit protein uL22.